A 644-amino-acid chain; its full sequence is Macrolide export ATP-binding/permease protein MacB (644 aa).

Residues 4–242 (IECKNINRYF…SNVGRIQEKA (239 aa)) enclose the ABC transporter domain. 40-47 (GQSGSGKS) contacts ATP. Transmembrane regions (helical) follow at residues 270–290 (LLTMLGIIIGIASVVSVVALG), 524–544 (IALISLVVGGIGVMNIMLVSV), 574–594 (LICVIGGLVGVGLSAAVSLVF), and 607–627 (AMSVIGAVACSTGIGIAFGFM).

Belongs to the ABC transporter superfamily. Macrolide exporter (TC 3.A.1.122) family. Homodimer.

Its subcellular location is the cell inner membrane. In terms of biological role, non-canonical ABC transporter that contains transmembrane domains (TMD), which form a pore in the inner membrane, and an ATP-binding domain (NBD), which is responsible for energy generation. Confers resistance against macrolides. In Neisseria meningitidis serogroup A / serotype 4A (strain DSM 15465 / Z2491), this protein is Macrolide export ATP-binding/permease protein MacB.